Consider the following 510-residue polypeptide: NADH-quinone oxidoreductase subunit N (510 aa).

A run of 14 helical transmembrane segments spans residues 14-34 (LLPE…DLFA), 42-62 (VIGW…IINM), 84-104 (AFKL…LSYL), 113-133 (GEYY…ASSA), 135-155 (LITL…LVGL), 170-190 (VVSG…VYGL), 208-228 (MAGY…GLAF), 247-267 (PTPV…ALIF), 286-306 (FFFE…MIIG), 323-343 (SGIA…SLFF), 346-366 (VIFY…VIMV), 390-410 (AIAM…VGFF), 426-446 (WLAA…FGII), and 466-486 (IWTF…FPGL).

Belongs to the complex I subunit 2 family. In terms of assembly, NDH-1 is composed of 14 different subunits. Subunits NuoA, H, J, K, L, M, N constitute the membrane sector of the complex.

Its subcellular location is the cell membrane. The enzyme catalyses a quinone + NADH + 5 H(+)(in) = a quinol + NAD(+) + 4 H(+)(out). In terms of biological role, NDH-1 shuttles electrons from NADH, via FMN and iron-sulfur (Fe-S) centers, to quinones in the respiratory chain. The immediate electron acceptor for the enzyme in this species is believed to be a menaquinone. Couples the redox reaction to proton translocation (for every two electrons transferred, four hydrogen ions are translocated across the cytoplasmic membrane), and thus conserves the redox energy in a proton gradient. This chain is NADH-quinone oxidoreductase subunit N, found in Brevibacillus brevis (strain 47 / JCM 6285 / NBRC 100599).